The primary structure comprises 928 residues: DNA mismatch repair protein MutS (928 aa).

G613 to S620 contacts ATP. Positions K854–S872 are enriched in basic and acidic residues. Residues K854–S880 are disordered.

It belongs to the DNA mismatch repair MutS family.

Its function is as follows. This protein is involved in the repair of mismatches in DNA. It is possible that it carries out the mismatch recognition step. This protein has a weak ATPase activity. The sequence is that of DNA mismatch repair protein MutS from Clostridium beijerinckii (strain ATCC 51743 / NCIMB 8052) (Clostridium acetobutylicum).